A 268-amino-acid chain; its full sequence is Secreted RxLR effector protein 6 (268 aa).

Positions 1-19 are cleaved as a signal peptide; that stretch reads MRGAFYIAIALLVVRSRTA. The RxLR-dEER signature appears at 48–63; that stretch reads RYLRDGLAHSAANEER. The segment at 90-123 is disordered; it reads IGGHSHTPKSKRKVNLSPAKSQSGIRKKSTSINK. Over residues 107–123 the composition is skewed to polar residues; it reads PAKSQSGIRKKSTSINK.

It belongs to the RxLR effector family.

Its subcellular location is the secreted. The protein resides in the host nucleus. It localises to the host cytoplasm. In terms of biological role, secreted effector that completely suppresses the host cell death induced by cell death-inducing proteins. The sequence is that of Secreted RxLR effector protein 6 from Plasmopara viticola (Downy mildew of grapevine).